Consider the following 200-residue polypeptide: 5'(3')-deoxyribonucleotidase, cytosolic type (200 aa).

Aspartate 12 serves as the catalytic Nucleophile. Residues aspartate 12 and aspartate 14 each contribute to the Mg(2+) site. The active-site Proton donor is aspartate 14. Positions 20, 46, 67, and 101 each coordinate substrate. Threonine 102 is subject to Phosphothreonine. Lysine 136 serves as a coordination point for substrate. Residue aspartate 147 participates in Mg(2+) binding. Serine 184 carries the post-translational modification Phosphoserine.

It belongs to the 5'(3')-deoxyribonucleotidase family. As to quaternary structure, homodimer. Requires Mg(2+) as cofactor.

Its subcellular location is the cytoplasm. Dephosphorylates the 5' and 2'(3')-phosphates of deoxyribonucleotides, with a preference for dUMP and dTMP, intermediate activity towards dGMP, and low activity towards dCMP and dAMP. This is 5'(3')-deoxyribonucleotidase, cytosolic type (Nt5c) from Mus musculus (Mouse).